We begin with the raw amino-acid sequence, 287 residues long: Cysteine-rich repeat secretory protein 59 (287 aa).

The first 26 residues, 1–26, serve as a signal peptide directing secretion; the sequence is METTKKLSPIFCFSSLLCLFFTMNQA. 2 consecutive Gnk2-homologous domains span residues 32–134 and 140–250; these read HMDT…DKFF and KKPN…ITTS. Residues Asn43, Asn47, Asn63, Asn72, Asn93, Asn103, Asn111, and Asn212 are each glycosylated (N-linked (GlcNAc...) asparagine).

This sequence belongs to the cysteine-rich repeat secretory protein family.

The protein localises to the secreted. This chain is Cysteine-rich repeat secretory protein 59 (CRRSP59), found in Arabidopsis thaliana (Mouse-ear cress).